A 232-amino-acid polypeptide reads, in one-letter code: TIR domain-containing adapter molecule 2 (232 aa).

A compositionally biased stretch (basic and acidic residues) spans 1 to 39 (MGVGKSKLDKCPLSWHKKDSVDADQDGHESDSKNSEEAC). The disordered stretch occupies residues 1 to 70 (MGVGKSKLDK…EAKGAGPEEQ (70 aa)). Glycine 2 carries the N-myristoyl glycine lipid modification. Positions 74–226 (EFLKFVILHA…SIWKETRSVS (153 aa)) constitute a TIR domain. Tyrosine 164 carries the phosphotyrosine modification.

Homodimer. Interacts with TLR4, TICAM1, IRF3 and IRF7 in response to LPS. Interacts with IL1R1, IL1RAP, IRAK2, IRAK3 and TRAF6. Interacts with protein kinase-inactive mutants of IRAK1 and IRAK4. Isoform 1 interacts with isoform 2; the interaction occurs in late endosomes and disrupts the interaction between isoform 1 and TICAM1. Interacts with MYD88; the interaction decreases after IL-18 stimulation in a time-dependent manner. Interacts with IL18R1 and IL18RAP. Interacts with TLR2. Interacts with RAB11FIP2. Post-translationally, myristoylated. Required for membrane association which is critical for its ability to initiate efficient signaling. In terms of processing, phosphorylated by PRKCE in response to LPS. Phosphorylation is essential for its function. It is depleted from the membrane upon phosphorylation. Tyrosine phosphorylation is inhibited by phosphatase PTPN4.

Its subcellular location is the cytoplasm. The protein localises to the golgi apparatus. It localises to the cell membrane. It is found in the early endosome. The protein resides in the late endosome. Its subcellular location is the endoplasmic reticulum. The protein localises to the cell projection. It localises to the phagocytic cup. In terms of biological role, functions as a sorting adapter in different signaling pathways to facilitate downstream signaling leading to type I interferon induction. In TLR4 signaling, physically bridges TLR4 and TICAM1 and functionally transmits signal to TICAM1 in early endosomes after endocytosis of TLR4. In TLR2 signaling, physically bridges TLR2 and MYD88 and is required for the TLR2-dependent movement of MYD88 to endosomes following ligand engagement. Involved in IL-18 signaling and is proposed to function as a sorting adapter for MYD88 in IL-18 signaling during adaptive immune response. Forms a complex with RAB11FIP2 that is recruited to the phagosomes to promote the activation of the actin-regulatory GTPases RAC1 and CDC42 and subsequent phagocytosis of Gram-negative bacteria. In Mus musculus (Mouse), this protein is TIR domain-containing adapter molecule 2 (Ticam2).